The chain runs to 156 residues: ATP synthase subunit b (156 aa).

A helical membrane pass occupies residues 11-31 (AIAFVLFVMFCMKFVWPPIMA).

This sequence belongs to the ATPase B chain family. As to quaternary structure, F-type ATPases have 2 components, F(1) - the catalytic core - and F(0) - the membrane proton channel. F(1) has five subunits: alpha(3), beta(3), gamma(1), delta(1), epsilon(1). F(0) has three main subunits: a(1), b(2) and c(10-14). The alpha and beta chains form an alternating ring which encloses part of the gamma chain. F(1) is attached to F(0) by a central stalk formed by the gamma and epsilon chains, while a peripheral stalk is formed by the delta and b chains.

The protein localises to the cell inner membrane. Its function is as follows. F(1)F(0) ATP synthase produces ATP from ADP in the presence of a proton or sodium gradient. F-type ATPases consist of two structural domains, F(1) containing the extramembraneous catalytic core and F(0) containing the membrane proton channel, linked together by a central stalk and a peripheral stalk. During catalysis, ATP synthesis in the catalytic domain of F(1) is coupled via a rotary mechanism of the central stalk subunits to proton translocation. Component of the F(0) channel, it forms part of the peripheral stalk, linking F(1) to F(0). The sequence is that of ATP synthase subunit b from Photorhabdus laumondii subsp. laumondii (strain DSM 15139 / CIP 105565 / TT01) (Photorhabdus luminescens subsp. laumondii).